A 466-amino-acid chain; its full sequence is Ribulose bisphosphate carboxylase large chain (466 aa).

Residue Lys-4 is modified to N6,N6,N6-trimethyllysine. Substrate contacts are provided by Asn-113 and Thr-163. Residue Lys-165 is the Proton acceptor of the active site. Residue Lys-167 coordinates substrate. Positions 191, 193, and 194 each coordinate Mg(2+). N6-carboxylysine is present on Lys-191. Catalysis depends on His-284, which acts as the Proton acceptor. The substrate site is built by Arg-285, His-317, and Ser-369.

The protein belongs to the RuBisCO large chain family. Type I subfamily. Heterohexadecamer of 8 large chains and 8 small chains; disulfide-linked. The disulfide link is formed within the large subunit homodimers. It depends on Mg(2+) as a cofactor. Post-translationally, the disulfide bond which can form in the large chain dimeric partners within the hexadecamer appears to be associated with oxidative stress and protein turnover.

The protein localises to the plastid. It localises to the chloroplast. The catalysed reaction is 2 (2R)-3-phosphoglycerate + 2 H(+) = D-ribulose 1,5-bisphosphate + CO2 + H2O. It carries out the reaction D-ribulose 1,5-bisphosphate + O2 = 2-phosphoglycolate + (2R)-3-phosphoglycerate + 2 H(+). Functionally, ruBisCO catalyzes two reactions: the carboxylation of D-ribulose 1,5-bisphosphate, the primary event in carbon dioxide fixation, as well as the oxidative fragmentation of the pentose substrate in the photorespiration process. Both reactions occur simultaneously and in competition at the same active site. This chain is Ribulose bisphosphate carboxylase large chain, found in Nelsonia canescens (Blue pussyleaf).